Consider the following 103-residue polypeptide: Large ribosomal subunit protein bL21 (103 aa).

Belongs to the bacterial ribosomal protein bL21 family. Part of the 50S ribosomal subunit. Contacts protein L20.

In terms of biological role, this protein binds to 23S rRNA in the presence of protein L20. The polypeptide is Large ribosomal subunit protein bL21 (Chromobacterium violaceum (strain ATCC 12472 / DSM 30191 / JCM 1249 / CCUG 213 / NBRC 12614 / NCIMB 9131 / NCTC 9757 / MK)).